Consider the following 308-residue polypeptide: uncharacterized protein (308 aa).

Residues 43-55 (SQYGTWADQHQNG) show a composition bias toward polar residues. Positions 43–289 (SQYGTWADQH…KEERSEECSP (247 aa)) are disordered. Phosphoserine is present on S62. The segment covering 80–90 (HLSSYTESTSV) has biased composition (polar residues). The span at 91-109 (EQRDSSRDRRSSSVDRSSS) shows a compositional bias: basic and acidic residues. A compositionally biased stretch (polar residues) spans 136-152 (IHQTSVLDSSALKTRVQ). Basic residues predominate over residues 153–168 (LSKRSRRRAPISHSLR). The residue at position 166 (S166) is a Phosphoserine. 2 stretches are compositionally biased toward basic and acidic residues: residues 175-186 (SESRSPLEEESH) and 193-216 (DSTEEKSPRRDESDEEPPRVERTP). A phosphoserine mark is found at S205, S259, S262, and S288.

This is an uncharacterized protein from Mus musculus (Mouse).